A 511-amino-acid chain; its full sequence is 2'-acyl-2-O-sulfo-trehalose (hydroxy)phthioceranyltransferase PapA1 (511 aa).

Belongs to the PapA acyltransferase family.

The catalysed reaction is a (hydroxy)phthioceranyl-[(hydroxy)phthioceranic acid synthase] + 2'-palmitoyl/stearoyl-2-O-sulfo-alpha,alpha-trehalose = a 3'-(hydroxy)phthioceranyl-2'-palmitoyl/stearoyl-2-O-sulfo-alpha,alpha-trehalose + holo-[(hydroxy)phthioceranic acid synthase].. In terms of biological role, required for the biosynthesis of sulfolipid-1 (SL-1), a major mycobacterial cell wall lipid. Catalyzes the acylation of trehalose-2-sulfate-2'-palmitate (SL659) by adding the (hydroxy)phthioceranoyl group at the 3'-position to yield the diacylated intermediate 2-palmitoyl-3-(C43)-phthioceranyl-alpha, alpha'-D-trehalose-2'-sulfate (SL1278). The protein is 2'-acyl-2-O-sulfo-trehalose (hydroxy)phthioceranyltransferase PapA1 (papA1) of Mycobacterium tuberculosis (strain CDC 1551 / Oshkosh).